A 357-amino-acid polypeptide reads, in one-letter code: G-protein coupled receptor 183 (357 aa).

At 1–27 (MANNFTTPLATSHGNNCDLYAHHSTAR) the chain is on the extracellular side. N-linked (GlcNAc...) asparagine glycosylation is present at N4. A helical transmembrane segment spans residues 28-53 (VLMPLHYSLVFIIGLVGNLLALVVIV). Residues 54 to 73 (QNRKKINSTTLYSMNLVISD) lie on the Cytoplasmic side of the membrane. A helical transmembrane segment spans residues 74–91 (ILFTTALPTRIAYYALGF). R83 lines the 7alpha,25-dihydroxycholesterol pocket. Residues 92–101 (DWRIGDALCR) are Extracellular-facing. C100 and C177 form a disulfide bridge. A helical transmembrane segment spans residues 102–123 (VTALVFYINTYAGVNFMTCLSI). 2 residues coordinate 7alpha,25-dihydroxycholesterol: Y108 and Y112. The interaction with G proteins stretch occupies residues 122-130 (SIDRFFAVV). The Cytoplasmic portion of the chain corresponds to 124-145 (DRFFAVVHPLRYNKIKRIEYAK). The helical transmembrane segment at 146 to 164 (GVCLSVWILVFAQTLPLLL) threads the bilayer. Residues 165–188 (TPMSKEEGDKTTCMEYPNFEGTAS) are Extracellular-facing. Residues 189 to 211 (LPWILLGACLLGYVLPITVILLC) traverse the membrane as a helical segment. The Cytoplasmic segment spans residues 212–237 (YSQICCKLFRTAKQNPLTEKSGVNKK). The helical transmembrane segment at 238–261 (ALNTIILIIVVFILCFTPYHVAII) threads the bilayer. Residue Y256 participates in 7alpha,25-dihydroxycholesterol binding. Residues 262–283 (QHMIKMLCSPGALECGARHSFQ) are Extracellular-facing. Residues 284–308 (ISLHFTVCLMNFNCCMDPFIYFFAC) traverse the membrane as a helical segment. The Cytoplasmic segment spans residues 309 to 357 (KGYKRKVMKMLKRQVSVSISSAVRSAPEENSREMTESQMMIHSKASNGR). Residues S324 and S345 each carry the phosphoserine modification. Residues 336-357 (EENSREMTESQMMIHSKASNGR) are disordered. Over residues 344 to 357 (ESQMMIHSKASNGR) the composition is skewed to polar residues.

The protein belongs to the G-protein coupled receptor 1 family. Homodimer and heterodimer. Heterodimerizes with CXCR5; leading to modulate the interaction between of CXCL13 and CXCR5. Expressed in mature B-cells and increases in expression early after activation, before being down-regulated in germinal center B-cells. Expressed in astrocytes. Specifically expressed in CD4(+) dendritic cells but not in CD8(+) dendritic cells. Expressed in monocyte/osteoclasts precursors and mature osteoclasts.

Its subcellular location is the cell membrane. In terms of biological role, G-protein coupled receptor expressed in lymphocytes that acts as a chemotactic receptor for B-cells, T-cells, splenic dendritic cells, monocytes/macrophages and astrocytes. Receptor for oxysterol 7-alpha,25-dihydroxycholesterol (7-alpha,25-OHC) and other related oxysterols. Mediates cell positioning and movement of a number of cells by binding the 7-alpha,25-OHC ligand that forms a chemotactic gradient. Binding of 7-alpha,25-OHC mediates the correct localization of B-cells during humoral immune responses. Collaborates with CXCR5 to mediate B-cell migration; probably by forming a heterodimer with CXCR5 that affects the interaction between of CXCL13 and CXCR5. Guides B-cell movement along the B-cell zone-T-cell zone boundary and later to interfollicular and outer follicular regions. Its specific expression during B-cell maturation helps position B-cells appropriately for mounting T-dependent antibody responses. Also acts as a chemotactic receptor for some T-cells upon binding to 7-alpha,25-OHC ligand. Promotes follicular helper T (Tfh) cells differentiation by positioning activated T-cells at the follicle-T-zone interface, promoting contact of newly activated CD4 T-cells with activated dendritic cells and exposing them to Tfh-cell-promoting inducible costimulator (ICOS) ligand. Expression in splenic dendritic cells is required for their homeostasis, localization and ability to induce B- and T-cell responses: GPR183 acts as a chemotactic receptor in dendritic cells that mediates the accumulation of CD4(+) dendritic cells in bridging channels. Regulates migration of astrocytes and is involved in communication between astrocytes and macrophages. Promotes osteoclast precursor migration to bone surfaces. Signals constitutively through G(i)-alpha, but not G(s)-alpha or G(q)-alpha. Signals constitutively also via MAPK1/3 (ERK1/2). This chain is G-protein coupled receptor 183, found in Mus musculus (Mouse).